The primary structure comprises 1293 residues: Late blight resistance protein R1-A (1293 aa).

Coiled coils occupy residues 423–446 and 538–560; these read RYSDSLDFLKNQLQVIQTEFESLQ and PRMNEEIVGFEDVIENLRKKLLN. The NB-ARC domain maps to 539–826; the sequence is RMNEEIVGFE…SEAFIKSSEG (288 aa). ATP is bound at residue 572 to 579; the sequence is GMPGLGKT. LRR repeat units lie at residues 876–899, 956–981, 1027–1049, 1056–1079, 1102–1125, 1149–1172, 1175–1197, 1198–1222, and 1235–1259; these read AEENFLLWINRDQITKPSSCVYSH, FKFLKVLDLEHRVFIDFIPTELVYLK, MVKLRHLYIPDFSTRIEAALLEN, LETLSTLYFSRVEDAELMLRKTPN, PIRLEILKLYRSKFKTIPFCISAP, LKHLEVLILYKVEFGDHREWKVSN, FPQLKILKLEYLSLVKWIVADDA, FPNLEQLVLRGCQDLMEIPSCFMDI, and ESVVKSALNIQETQVEDYQNTNFKL.

Belongs to the disease resistance NB-LRR family.

The protein resides in the cytoplasm. Its subcellular location is the membrane. Functionally, confers resistance to late blight (Phytophthora infestans) races carrying the avirulence gene Avr1. Resistance proteins guard the plant against pathogens that contain an appropriate avirulence protein via an indirect interaction with this avirulence protein. That triggers a defense system including the hypersensitive response, which restricts the pathogen growth. In Solanum demissum (Wild potato), this protein is Late blight resistance protein R1-A (R1A).